A 332-amino-acid polypeptide reads, in one-letter code: D-alanine--D-alanine ligase (332 aa).

A compositionally biased stretch (polar residues) spans 1–17 (MPMTMTQSATNPTATPV). The tract at residues 1 to 28 (MPMTMTQSATNPTATPVSANKASANAAT) is disordered. Residues 18 to 28 (SANKASANAAT) are compositionally biased toward low complexity. The region spanning 132–329 (KQLWHGCGLS…FEQLCWHILA (198 aa)) is the ATP-grasp domain. 158–213 (VNTLGLPLIVKPVHEGSSIGMSKVNTLDELPKAYEVAAGCGDVVMAEKWITGREFT) serves as a coordination point for ATP. Mg(2+) is bound by residues D283, E296, and N298.

It belongs to the D-alanine--D-alanine ligase family. The cofactor is Mg(2+). Requires Mn(2+) as cofactor.

The protein localises to the cytoplasm. It catalyses the reaction 2 D-alanine + ATP = D-alanyl-D-alanine + ADP + phosphate + H(+). Its pathway is cell wall biogenesis; peptidoglycan biosynthesis. Its function is as follows. Cell wall formation. In Psychrobacter sp. (strain PRwf-1), this protein is D-alanine--D-alanine ligase.